Here is a 461-residue protein sequence, read N- to C-terminus: Protein IQ-DOMAIN 2 (461 aa).

The tract at residues 1–55 (MGKKAKWFSSVKKAFSPDSKKSKQKLAEGQNGVISNPPVVDNVRQSSSSPPPALA) is disordered. The 29-residue stretch at 114 to 142 (EEAAAILIQTIFRGYLARRALRAMRGLVR) folds into the IQ domain. Residues 141-158 (VRLKLLMEGSVVKRQAAN) are calmodulin-binding. Residues 278–461 (PLESSEKEQS…GVTVTNGAGS (184 aa)) form a disordered region. Residues 310-345 (LTRNGSTQPNTPSSARGTPRNKNSFFSPPTPSRLNQ) are compositionally biased toward polar residues. Positions 425 to 432 (KKRLSYPT) match the Nuclear localization signal motif.

This sequence belongs to the IQD family. As to quaternary structure, binds to multiple calmodulin (CaM) in the presence of Ca(2+) and CaM-like proteins.

Its subcellular location is the nucleus. The protein localises to the cytoplasm. It is found in the cytoskeleton. May be involved in cooperative interactions with calmodulins or calmodulin-like proteins. Recruits calmodulin proteins to microtubules, thus being a potential scaffold in cellular signaling and trafficking. May associate with nucleic acids and regulate gene expression at the transcriptional or post-transcriptional level. The polypeptide is Protein IQ-DOMAIN 2 (Arabidopsis thaliana (Mouse-ear cress)).